The following is a 394-amino-acid chain: Large ribosomal subunit protein bL27m (394 aa).

A mitochondrion-targeting transit peptide spans 1–34 (MSFIKQVGKLIRPNDYSSSIFQTSFLNNVIQVRT). 2 disordered regions span residues 36-57 (TKRAAGSKTNKNDSAGRRLGPK) and 145-181 (AEAEKEENHMSRKEFLQQPELEKTRQEQQNQEEQRAS). The segment covering 145–170 (AEAEKEENHMSRKEFLQQPELEKTRQ) has biased composition (basic and acidic residues).

It belongs to the bacterial ribosomal protein bL27 family.

Its subcellular location is the mitochondrion. Functionally, component of the large subunit of mitochondrial ribosome. This is Large ribosomal subunit protein bL27m (MRPL2) from Debaryomyces hansenii (strain ATCC 36239 / CBS 767 / BCRC 21394 / JCM 1990 / NBRC 0083 / IGC 2968) (Yeast).